The primary structure comprises 359 residues: UPF0496 protein At3g57100 (359 aa).

A coiled-coil region spans residues 179 to 208 (HEELAKMVVKLEKTMKDIDKKLRRVRGRRA). A helical transmembrane segment spans residues 214 to 234 (LLAPVIAVIFLSKLVAGLVPI).

It belongs to the UPF0496 family.

It is found in the membrane. The polypeptide is UPF0496 protein At3g57100 (Arabidopsis thaliana (Mouse-ear cress)).